Here is a 185-residue protein sequence, read N- to C-terminus: ATP-dependent protease subunit HslV (185 aa).

The active site involves threonine 12. Na(+) contacts are provided by alanine 168, cysteine 171, and threonine 174.

This sequence belongs to the peptidase T1B family. HslV subfamily. A double ring-shaped homohexamer of HslV is capped on each side by a ring-shaped HslU homohexamer. The assembly of the HslU/HslV complex is dependent on binding of ATP.

The protein resides in the cytoplasm. It catalyses the reaction ATP-dependent cleavage of peptide bonds with broad specificity.. With respect to regulation, allosterically activated by HslU binding. Protease subunit of a proteasome-like degradation complex believed to be a general protein degrading machinery. This Ruegeria pomeroyi (strain ATCC 700808 / DSM 15171 / DSS-3) (Silicibacter pomeroyi) protein is ATP-dependent protease subunit HslV.